A 209-amino-acid chain; its full sequence is MAAKQERWRELAEVKRELAERDWFPATSGNLSIKVTDEPLTFLVTASGKDKRKETVEDFLLVDQNGEPAESGHSLKPSAETLLHTHLYNKTNAGCCLHVHTVNNNVISELYGDQKKITFKGQEIIKALGLWEENAEVTVPIIENPAHIPTLAALFAEEISEDSGAVLIRNHGITAWGKTAFEAKRVLEAYEFLFSYHLKLKTLEHQLVK.

Zn(2+) contacts are provided by His-98 and His-100.

It belongs to the aldolase class II family. MtnB subfamily. Homotetramer. It depends on Zn(2+) as a cofactor.

The enzyme catalyses 5-(methylsulfanyl)-D-ribulose 1-phosphate = 5-methylsulfanyl-2,3-dioxopentyl phosphate + H2O. The protein operates within amino-acid biosynthesis; L-methionine biosynthesis via salvage pathway; L-methionine from S-methyl-5-thio-alpha-D-ribose 1-phosphate: step 2/6. Catalyzes the dehydration of methylthioribulose-1-phosphate (MTRu-1-P) into 2,3-diketo-5-methylthiopentyl-1-phosphate (DK-MTP-1-P). In Bacillus subtilis (strain 168), this protein is Methylthioribulose-1-phosphate dehydratase (mtnB).